The chain runs to 368 residues: Phospho-N-acetylmuramoyl-pentapeptide-transferase (368 aa).

The next 9 helical transmembrane spans lie at 30 to 50, 72 to 92, 99 to 119, 139 to 159, 170 to 190, 201 to 221, 238 to 258, 264 to 286, and 345 to 365; these read AAAV…IKYL, LPTM…FLWA, VWLI…DDYM, VLLG…SVLL, LTID…TAVS, GLAS…AYLA, GGEI…FLWF, EIIM…ALLI, and KIVI…LMTL.

This sequence belongs to the glycosyltransferase 4 family. MraY subfamily. It depends on Mg(2+) as a cofactor.

The protein resides in the cell inner membrane. It carries out the reaction UDP-N-acetyl-alpha-D-muramoyl-L-alanyl-gamma-D-glutamyl-meso-2,6-diaminopimeloyl-D-alanyl-D-alanine + di-trans,octa-cis-undecaprenyl phosphate = di-trans,octa-cis-undecaprenyl diphospho-N-acetyl-alpha-D-muramoyl-L-alanyl-D-glutamyl-meso-2,6-diaminopimeloyl-D-alanyl-D-alanine + UMP. The protein operates within cell wall biogenesis; peptidoglycan biosynthesis. Its function is as follows. Catalyzes the initial step of the lipid cycle reactions in the biosynthesis of the cell wall peptidoglycan: transfers peptidoglycan precursor phospho-MurNAc-pentapeptide from UDP-MurNAc-pentapeptide onto the lipid carrier undecaprenyl phosphate, yielding undecaprenyl-pyrophosphoryl-MurNAc-pentapeptide, known as lipid I. In Chlorobium limicola (strain DSM 245 / NBRC 103803 / 6330), this protein is Phospho-N-acetylmuramoyl-pentapeptide-transferase.